We begin with the raw amino-acid sequence, 122 residues long: Large ribosomal subunit protein uL14c (122 aa).

This sequence belongs to the universal ribosomal protein uL14 family. Part of the 50S ribosomal subunit.

Its subcellular location is the plastid. It is found in the chloroplast. Its function is as follows. Binds to 23S rRNA. The protein is Large ribosomal subunit protein uL14c of Lepidium virginicum (Virginia pepperweed).